The sequence spans 192 residues: ATP synthase subunit b 2 (192 aa).

A helical membrane pass occupies residues 39–59; the sequence is SGFLAQLIWLALAFGLLYYLM.

This sequence belongs to the ATPase B chain family. As to quaternary structure, F-type ATPases have 2 components, F(1) - the catalytic core - and F(0) - the membrane proton channel. F(1) has five subunits: alpha(3), beta(3), gamma(1), delta(1), epsilon(1). F(0) has three main subunits: a(1), b(2) and c(10-14). The alpha and beta chains form an alternating ring which encloses part of the gamma chain. F(1) is attached to F(0) by a central stalk formed by the gamma and epsilon chains, while a peripheral stalk is formed by the delta and b chains.

The protein localises to the cell inner membrane. In terms of biological role, f(1)F(0) ATP synthase produces ATP from ADP in the presence of a proton or sodium gradient. F-type ATPases consist of two structural domains, F(1) containing the extramembraneous catalytic core and F(0) containing the membrane proton channel, linked together by a central stalk and a peripheral stalk. During catalysis, ATP synthesis in the catalytic domain of F(1) is coupled via a rotary mechanism of the central stalk subunits to proton translocation. Component of the F(0) channel, it forms part of the peripheral stalk, linking F(1) to F(0). The b'-subunit is a diverged and duplicated form of b found in plants and photosynthetic bacteria. The polypeptide is ATP synthase subunit b 2 (atpF2) (Methylobacterium radiotolerans (strain ATCC 27329 / DSM 1819 / JCM 2831 / NBRC 15690 / NCIMB 10815 / 0-1)).